We begin with the raw amino-acid sequence, 304 residues long: Coenzyme PQQ synthesis protein B (304 aa).

It belongs to the PqqB family.

It functions in the pathway cofactor biosynthesis; pyrroloquinoline quinone biosynthesis. Its function is as follows. May be involved in the transport of PQQ or its precursor to the periplasm. This is Coenzyme PQQ synthesis protein B from Pseudomonas aeruginosa (strain ATCC 15692 / DSM 22644 / CIP 104116 / JCM 14847 / LMG 12228 / 1C / PRS 101 / PAO1).